A 298-amino-acid chain; its full sequence is Mimecan (298 aa).

The first 20 residues, 1–20 (MKTLQSTLLLLLFVPLIKPA), serve as a signal peptide directing secretion. The N-linked (GlcNAc...) (keratan sulfate) asparagine glycan is linked to Asn-88. 7 LRR repeats span residues 112-131 (DAVPPLPKESAYLYARFNKI), 132-155 (KKLTAKDFADIPNLRRLDFTGNLI), 156-179 (EDIEDGTFSKLSLLEELSLAENQL), 180-199 (LKLPVLPPKLTLFNAKYNKI), 200-225 (KSRGIKANAFKKLNNLTFLYLDHNAL), 226-246 (ESVPLNLPESLRVIHLQFNNI), and 247-277 (ASITDDTFCKANDTSYIRDRIEEIRLEGNPI). Asn-214 carries an N-linked (GlcNAc...) (keratan sulfate) asparagine glycan. Cys-255 and Cys-288 are disulfide-bonded. The N-linked (GlcNAc...) (keratan sulfate) asparagine glycan is linked to Asn-258.

It belongs to the small leucine-rich proteoglycan (SLRP) family. SLRP class III subfamily. Post-translationally, contains keratan sulfate.

The protein resides in the secreted. It is found in the extracellular space. It localises to the extracellular matrix. Induces bone formation in conjunction with TGF-beta-1 or TGF-beta-2. The sequence is that of Mimecan (OGN) from Pongo abelii (Sumatran orangutan).